The primary structure comprises 320 residues: Mycothiol acetyltransferase (320 aa).

2 consecutive N-acetyltransferase domains span residues Arg-16–Arg-141 and Leu-152–Ala-320. Glu-36 lines the 1D-myo-inositol 2-(L-cysteinylamino)-2-deoxy-alpha-D-glucopyranoside pocket. Acetyl-CoA-binding positions include Leu-80–Val-82 and Arg-88–Thr-93. 1D-myo-inositol 2-(L-cysteinylamino)-2-deoxy-alpha-D-glucopyranoside is bound by residues Glu-179, Lys-229, and Glu-239. Acetyl-CoA contacts are provided by residues Leu-243–Val-245 and Gln-250–Arg-256. Tyr-284 is a binding site for 1D-myo-inositol 2-(L-cysteinylamino)-2-deoxy-alpha-D-glucopyranoside. Asn-289 to Arg-294 provides a ligand contact to acetyl-CoA.

This sequence belongs to the acetyltransferase family. MshD subfamily. Monomer.

It carries out the reaction 1D-myo-inositol 2-(L-cysteinylamino)-2-deoxy-alpha-D-glucopyranoside + acetyl-CoA = mycothiol + CoA + H(+). Catalyzes the transfer of acetyl from acetyl-CoA to desacetylmycothiol (Cys-GlcN-Ins) to form mycothiol. The protein is Mycothiol acetyltransferase of Mycobacterium marinum (strain ATCC BAA-535 / M).